Consider the following 137-residue polypeptide: Small heat shock protein IbpA (137 aa).

Residues 28–137 (SQSNGGYPPY…AKKPRRIEIN (110 aa)) enclose the sHSP domain.

Belongs to the small heat shock protein (HSP20) family. In terms of assembly, monomer. Forms homomultimers of about 100-150 subunits at optimal growth temperatures. Conformation changes to monomers at high temperatures or high ionic concentrations.

It is found in the cytoplasm. Its function is as follows. Associates with aggregated proteins, together with IbpB, to stabilize and protect them from irreversible denaturation and extensive proteolysis during heat shock and oxidative stress. Aggregated proteins bound to the IbpAB complex are more efficiently refolded and reactivated by the ATP-dependent chaperone systems ClpB and DnaK/DnaJ/GrpE. Its activity is ATP-independent. The chain is Small heat shock protein IbpA from Shigella sonnei (strain Ss046).